The following is an 84-amino-acid chain: Large ribosomal subunit protein bL31B (84 aa).

It belongs to the bacterial ribosomal protein bL31 family. Type B subfamily. In terms of assembly, part of the 50S ribosomal subunit.

The chain is Large ribosomal subunit protein bL31B from Phocaeicola vulgatus (strain ATCC 8482 / DSM 1447 / JCM 5826 / CCUG 4940 / NBRC 14291 / NCTC 11154) (Bacteroides vulgatus).